The sequence spans 461 residues: Cysteine--tRNA ligase (461 aa).

Cys-29 provides a ligand contact to Zn(2+). Positions 31-41 (MTIYDLCHVGH) match the 'HIGH' region motif. Positions 213, 238, and 242 each coordinate Zn(2+). The short motif at 274 to 278 (KMSKS) is the 'KMSKS' region element. Residue Lys-277 coordinates ATP.

The protein belongs to the class-I aminoacyl-tRNA synthetase family. As to quaternary structure, monomer. Requires Zn(2+) as cofactor.

It localises to the cytoplasm. It carries out the reaction tRNA(Cys) + L-cysteine + ATP = L-cysteinyl-tRNA(Cys) + AMP + diphosphate. This chain is Cysteine--tRNA ligase, found in Methylibium petroleiphilum (strain ATCC BAA-1232 / LMG 22953 / PM1).